The sequence spans 404 residues: Multidrug resistance protein MdtG (404 aa).

Transmembrane regions (helical) follow at residues 19 to 39, 56 to 76, 90 to 110, 113 to 133, 144 to 164, 171 to 191, 222 to 242, 254 to 274, 288 to 308, 317 to 337, and 376 to 396; these read LGCFLTGAAFSLVMPFLPLYV, LVFSITFLFSAIASPFWGGLA, LGMAIVMLLMGMAQNIWQFLI, ALLGLLGGFIPNANALIATQV, TLSTGGVSGALLGPLAGGLLA, PVFFITASVLFICFLLTFFFI, LFVTTLIIQVATGSIAPILTL, IAFISGMIASVPGVAALLSAP, ILIVALIISVLLLIPMSFVQT, FLLGAADGALLPAVQTLLVYN, and AVFCVTAGVVLFNAIYSWNSL.

Belongs to the major facilitator superfamily. DHA1 family. MdtG (TC 2.A.1.2.20) subfamily.

Its subcellular location is the cell inner membrane. The chain is Multidrug resistance protein MdtG from Salmonella typhimurium (strain LT2 / SGSC1412 / ATCC 700720).